Here is a 257-residue protein sequence, read N- to C-terminus: MDRIIEKLDHGWWVVSHEQKLWLPKGELPYGEAANFDLVGQRALQIGEWQGEPVWLIQQQRRHDMGSVRQVIDLDVGLFQLAGRGVQLAEFYRSHKYCGYCGHEMYPSKTEWAMLCSHCRERYYPQIAPCIIVAIRRDDSLLLAQHTRHRNGVHTVLAGFVEVGETLEQAVAREVMEESGIKVKNLRYVTSQPWPFPQSLMTAFMAEYDSGDIVIDPKELLEANWYRYDDLPLLPPPGTVARRLIEDTVAMCRAEYE.

2 residues coordinate substrate: Lys25 and Arg69. Residues Cys98 and Cys101 each contribute to the Zn(2+) site. Substrate is bound at residue Glu111. Zn(2+) is bound by residues Cys116 and Cys119. Residue Tyr124 participates in substrate binding. One can recognise a Nudix hydrolase domain in the interval 125–248 (PQIAPCIIVA…TVARRLIEDT (124 aa)). Residues Ala158, Glu174, and Glu178 each contribute to the a divalent metal cation site. The Nudix box signature appears at 159–180 (GFVEVGETLEQAVAREVMEESG). 192–199 (QPWPFPQS) lines the substrate pocket. Glu219 contributes to the a divalent metal cation binding site. Ala241 provides a ligand contact to substrate.

It belongs to the Nudix hydrolase family. NudC subfamily. As to quaternary structure, homodimer. Mg(2+) is required as a cofactor. It depends on Mn(2+) as a cofactor. The cofactor is Zn(2+).

The enzyme catalyses a 5'-end NAD(+)-phospho-ribonucleoside in mRNA + H2O = a 5'-end phospho-adenosine-phospho-ribonucleoside in mRNA + beta-nicotinamide D-ribonucleotide + 2 H(+). It carries out the reaction NAD(+) + H2O = beta-nicotinamide D-ribonucleotide + AMP + 2 H(+). It catalyses the reaction NADH + H2O = reduced beta-nicotinamide D-ribonucleotide + AMP + 2 H(+). Its function is as follows. mRNA decapping enzyme that specifically removes the nicotinamide adenine dinucleotide (NAD) cap from a subset of mRNAs by hydrolyzing the diphosphate linkage to produce nicotinamide mononucleotide (NMN) and 5' monophosphate mRNA. The NAD-cap is present at the 5'-end of some mRNAs and stabilizes RNA against 5'-processing. Has preference for mRNAs with a 5'-end purine. Catalyzes the hydrolysis of a broad range of dinucleotide pyrophosphates. The polypeptide is NAD-capped RNA hydrolase NudC (Shigella flexneri).